The chain runs to 336 residues: Shematrin-like protein 1 (336 aa).

The first 16 residues, M1–A16, serve as a signal peptide directing secretion.

Prismatic layer of shell (at protein level). Expressed primarily in the mantle with highest level in the mantle edge and lower level in the mantle pallium.

The protein resides in the secreted. This Pinctada maxima (Silver-lipped pearl oyster) protein is Shematrin-like protein 1.